The chain runs to 208 residues: Ribosomal RNA small subunit methyltransferase J (208 aa).

S-adenosyl-L-methionine is bound by residues 54 to 55, 70 to 71, and Asp-122; these read RD and ER.

This sequence belongs to the methyltransferase superfamily. RsmJ family.

It is found in the cytoplasm. The catalysed reaction is guanosine(1516) in 16S rRNA + S-adenosyl-L-methionine = N(2)-methylguanosine(1516) in 16S rRNA + S-adenosyl-L-homocysteine + H(+). In terms of biological role, specifically methylates the guanosine in position 1516 of 16S rRNA. The polypeptide is Ribosomal RNA small subunit methyltransferase J (Agrobacterium fabrum (strain C58 / ATCC 33970) (Agrobacterium tumefaciens (strain C58))).